The primary structure comprises 266 residues: Undecaprenyl-diphosphatase (266 aa).

The next 8 membrane-spanning stretches (helical) occupy residues 1–21, 39–59, 87–107, 111–131, 149–169, 183–203, 218–238, and 246–266; these read METF…FLPI, QGFS…VIYF, WWII…KDFI, LRNT…LWWA, ALLI…RSGA, AAAK…AILV, ALGI…YYFL, and MTPF…LILW.

It belongs to the UppP family.

The protein resides in the cell inner membrane. The catalysed reaction is di-trans,octa-cis-undecaprenyl diphosphate + H2O = di-trans,octa-cis-undecaprenyl phosphate + phosphate + H(+). Its function is as follows. Catalyzes the dephosphorylation of undecaprenyl diphosphate (UPP). Confers resistance to bacitracin. The protein is Undecaprenyl-diphosphatase of Shewanella denitrificans (strain OS217 / ATCC BAA-1090 / DSM 15013).